The sequence spans 194 residues: A-type ATP synthase subunit E (194 aa).

This sequence belongs to the V-ATPase E subunit family. Has multiple subunits with at least A(3), B(3), C, D, E, F, H, I and proteolipid K(x).

Its subcellular location is the cell membrane. In terms of biological role, component of the A-type ATP synthase that produces ATP from ADP in the presence of a proton gradient across the membrane. The protein is A-type ATP synthase subunit E of Saccharolobus islandicus (strain Y.N.15.51 / Yellowstone #2) (Sulfolobus islandicus).